Reading from the N-terminus, the 292-residue chain is MRAYPIKTRYIKRGENFIPIVVEAIKNSGIKLEDGDFVVLSEKMVSTAEGNFIDESKFKPGVLAYLCYYWSKYLWGYVLGKLLKVKEDKIKNLRRMPKEETLKHKQTIIEIVGLRYALKPYAEGGVDLTNVPGTYACPLPKNPKKWAEELYKEIKKELGVDVVVMVADTDATYRVLNFYFTALPYAIDGIISGIGVFGFILGRLADVLKIGGFAGCTPLAIAGNEVYKKYSIGELTRIAFICDRVHKTIKNINEVLEKYNTYVITEEILEKLEHTPVVVVKIKEEYKPESQR.

Residues 175 to 197 (VLNFYFTALPYAIDGIISGIGVF) form a helical membrane-spanning segment.

The protein localises to the membrane. This is an uncharacterized protein from Methanocaldococcus jannaschii (strain ATCC 43067 / DSM 2661 / JAL-1 / JCM 10045 / NBRC 100440) (Methanococcus jannaschii).